The following is a 627-amino-acid chain: Chaperone protein HtpG (627 aa).

The tract at residues 1–339 (MKGQETRGFQ…SNDLPLNVSR (339 aa)) is a; substrate-binding. Positions 340–555 (EILQDSRVTQ…ADEMSTQMAK (216 aa)) are b. Residues 556–627 (LFAAAGQQAP…IRRMNQLLSA (72 aa)) are c.

This sequence belongs to the heat shock protein 90 family. Homodimer.

The protein resides in the cytoplasm. Its function is as follows. Molecular chaperone. Has ATPase activity. This chain is Chaperone protein HtpG, found in Pectobacterium atrosepticum (strain SCRI 1043 / ATCC BAA-672) (Erwinia carotovora subsp. atroseptica).